A 388-amino-acid polypeptide reads, in one-letter code: Succinate--CoA ligase [ADP-forming] subunit beta (388 aa).

An ATP-grasp domain is found at 9–244 (KALFAEYGLP…PSQDDAREAH (236 aa)). ATP-binding positions include K46, 53 to 55 (GRG), E99, T102, and E107. Positions 199 and 213 each coordinate Mg(2+). Residues N264 and 321–323 (GIV) each bind substrate.

The protein belongs to the succinate/malate CoA ligase beta subunit family. Heterotetramer of two alpha and two beta subunits. Mg(2+) serves as cofactor.

The enzyme catalyses succinate + ATP + CoA = succinyl-CoA + ADP + phosphate. The catalysed reaction is GTP + succinate + CoA = succinyl-CoA + GDP + phosphate. It participates in carbohydrate metabolism; tricarboxylic acid cycle; succinate from succinyl-CoA (ligase route): step 1/1. In terms of biological role, succinyl-CoA synthetase functions in the citric acid cycle (TCA), coupling the hydrolysis of succinyl-CoA to the synthesis of either ATP or GTP and thus represents the only step of substrate-level phosphorylation in the TCA. The beta subunit provides nucleotide specificity of the enzyme and binds the substrate succinate, while the binding sites for coenzyme A and phosphate are found in the alpha subunit. The polypeptide is Succinate--CoA ligase [ADP-forming] subunit beta (Shewanella halifaxensis (strain HAW-EB4)).